The primary structure comprises 350 residues: Phosphoribosylformylglycinamidine cyclo-ligase (350 aa).

The protein belongs to the AIR synthase family.

It localises to the cytoplasm. It catalyses the reaction 2-formamido-N(1)-(5-O-phospho-beta-D-ribosyl)acetamidine + ATP = 5-amino-1-(5-phospho-beta-D-ribosyl)imidazole + ADP + phosphate + H(+). The protein operates within purine metabolism; IMP biosynthesis via de novo pathway; 5-amino-1-(5-phospho-D-ribosyl)imidazole from N(2)-formyl-N(1)-(5-phospho-D-ribosyl)glycinamide: step 2/2. The protein is Phosphoribosylformylglycinamidine cyclo-ligase of Pseudoalteromonas translucida (strain TAC 125).